Consider the following 109-residue polypeptide: MTATTTTAAGGGKVQPRGLPVALSLLLLLVLAAGLGGGAEAQQTCAGQLRGLAPCLRYSVPPLPGQVPPAPGPECCSALGAVSRDCACGTFSIINSLPAKCALPPVSCQ.

An N-terminal signal peptide occupies residues 1 to 41; it reads MTATTTTAAGGGKVQPRGLPVALSLLLLLVLAAGLGGGAEA. Cystine bridges form between Cys45-Cys86, Cys55-Cys75, Cys76-Cys101, and Cys88-Cys108.

This sequence belongs to the A9/FIL1 family. In terms of tissue distribution, tapetum of anthers.

Its subcellular location is the secreted. The sequence is that of Anther-specific protein MZm3-3 from Zea mays (Maize).